A 330-amino-acid chain; its full sequence is Phenylalanine--tRNA ligase alpha subunit (330 aa).

Residue Glu-246 participates in Mg(2+) binding.

It belongs to the class-II aminoacyl-tRNA synthetase family. Phe-tRNA synthetase alpha subunit type 1 subfamily. Tetramer of two alpha and two beta subunits. Requires Mg(2+) as cofactor.

The protein resides in the cytoplasm. It carries out the reaction tRNA(Phe) + L-phenylalanine + ATP = L-phenylalanyl-tRNA(Phe) + AMP + diphosphate + H(+). This chain is Phenylalanine--tRNA ligase alpha subunit, found in Sulfurimonas denitrificans (strain ATCC 33889 / DSM 1251) (Thiomicrospira denitrificans (strain ATCC 33889 / DSM 1251)).